Here is a 468-residue protein sequence, read N- to C-terminus: Beta-amylase (468 aa).

Positions 1–36 (MTLYRSLWKKGCMLLLSLVLSLTAFIGSPSNTASAA) are cleaved as a signal peptide. D76 is a binding site for substrate. E83 and D87 together coordinate Ca(2+). The substrate site is built by H116 and D124. Residues C118 and C126 are joined by a disulfide bond. E170 is a Ca(2+) binding site. The active-site Proton donor is E198. Residues K314, H319, and T357 each coordinate substrate. E394 functions as the Proton acceptor in the catalytic mechanism. Substrate-binding positions include 395–396 (NA) and R423.

This sequence belongs to the glycosyl hydrolase 14 family. Ca(2+) is required as a cofactor.

It catalyses the reaction Hydrolysis of (1-&gt;4)-alpha-D-glucosidic linkages in polysaccharides so as to remove successive maltose units from the non-reducing ends of the chains.. This is Beta-amylase from Cytobacillus firmus (Bacillus firmus).